A 936-amino-acid polypeptide reads, in one-letter code: Protein translocase subunit SecA (936 aa).

ATP is bound by residues glutamine 90, 108–112 (GEGKT), and aspartate 499.

This sequence belongs to the SecA family. As to quaternary structure, monomer and homodimer. Part of the essential Sec protein translocation apparatus which comprises SecA, SecYEG and auxiliary proteins SecDF. Other proteins may also be involved.

The protein localises to the cell inner membrane. It localises to the cellular thylakoid membrane. The protein resides in the cytoplasm. The catalysed reaction is ATP + H2O + cellular proteinSide 1 = ADP + phosphate + cellular proteinSide 2.. Its function is as follows. Part of the Sec protein translocase complex. Interacts with the SecYEG preprotein conducting channel. Has a central role in coupling the hydrolysis of ATP to the transfer of proteins into and across the cell membrane, serving as an ATP-driven molecular motor driving the stepwise translocation of polypeptide chains across the membrane. In terms of biological role, probably participates in protein translocation into and across both the cytoplasmic and thylakoid membranes in cyanobacterial cells. The chain is Protein translocase subunit SecA from Trichodesmium erythraeum (strain IMS101).